The following is a 549-amino-acid chain: 65-kDa microtubule-associated protein 9 (549 aa).

3 coiled-coil regions span residues Ile-36–Ile-123, Ser-160–Leu-199, and Gly-459–Gln-492. The interval Glu-474 to Gly-549 is disordered. A compositionally biased stretch (basic residues) spans Arg-481–Gln-490. Phosphoserine is present on residues Ser-501 and Ser-546. Residues Val-514–Gly-549 are compositionally biased toward polar residues.

It belongs to the MAP65/ASE1 family. In terms of assembly, forms dimer. Binds to microtubules (MT).

It localises to the nucleus. The protein resides in the cytoplasm. It is found in the cytoskeleton. The protein localises to the spindle pole. This chain is 65-kDa microtubule-associated protein 9 (MAP65-9), found in Arabidopsis thaliana (Mouse-ear cress).